We begin with the raw amino-acid sequence, 427 residues long: Serine/arginine (SR)-type shuttling mRNA binding protein GBP2 (427 aa).

Positions 1–101 (MERELGMYGN…GRGGGRGRTL (101 aa)) are disordered. A compositionally biased stretch (basic and acidic residues) spans 22 to 32 (RLSDDRDRYDD). Position 24 is a phosphoserine (Ser-24). Over residues 35–44 (DSSSNNGNGS) the composition is skewed to low complexity. Basic and acidic residues predominate over residues 50-60 (DRGSRFNDRYD). 2 consecutive RRM domains span residues 122 to 198 (NSIF…QDNP) and 219 to 296 (FEVF…EGRF). Thr-130 carries the post-translational modification Phosphothreonine. Over residues 300-317 (KNNDRYNQRREDLEDTRG) the composition is skewed to basic and acidic residues. The tract at residues 300–319 (KNNDRYNQRREDLEDTRGTE) is disordered. Positions 349–426 (CFIYCSNLPF…CSLQISYARR (78 aa)) constitute an RRM 3 domain.

Post-translationally, methylated by HMT1.

The protein resides in the cytoplasm. The protein localises to the nucleus. Its subcellular location is the chromosome. It localises to the telomere. It is found in the P-body. The protein resides in the stress granule. Binds to intron-containing transcripts and is involved in quality control for the export of spliced mRNAs from the nucleus. Binds to pre-mRNAs until splicing is completed or until faulty mRNAs are degraded. On correctly spliced mRNAs, GBP2 and HRB1 recruit MEX67 to allow nuclear export. On faulty mRNAs, GBP2 and HRB1 associate with the TRAMP complex that guides those pre-mRNAs to the exosome for degradation. Binds single-stranded telomeric sequences of the type (TG[1-3])n in vitro. Influences the localization of RAP1 in the nuclei. Involved in modulating telomere length. The sequence is that of Serine/arginine (SR)-type shuttling mRNA binding protein GBP2 from Saccharomyces cerevisiae (strain ATCC 204508 / S288c) (Baker's yeast).